The sequence spans 451 residues: Bifunctional protein GlmU (451 aa).

The pyrophosphorylase stretch occupies residues 1–229 (MQRHAIILAA…FDEIIGVNDR (229 aa)). Residues 8–11 (LAAG), Lys22, Gln72, and 77–78 (GT) each bind UDP-N-acetyl-alpha-D-glucosamine. Mg(2+) is bound at residue Asp102. The UDP-N-acetyl-alpha-D-glucosamine site is built by Gly139, Glu154, and Asn227. Asn227 serves as a coordination point for Mg(2+). The linker stretch occupies residues 230–250 (LMLSEAEKALQQRINRYHMEN). An N-acetyltransferase region spans residues 251-451 (GVTIIDPSST…QVNKEGYLKK (201 aa)). UDP-N-acetyl-alpha-D-glucosamine-binding residues include Arg332 and Lys350. The Proton acceptor role is filled by His362. UDP-N-acetyl-alpha-D-glucosamine contacts are provided by Tyr365 and Asn376. Acetyl-CoA is bound by residues 385 to 386 (NY), Ala422, and Arg439.

It in the N-terminal section; belongs to the N-acetylglucosamine-1-phosphate uridyltransferase family. This sequence in the C-terminal section; belongs to the transferase hexapeptide repeat family. As to quaternary structure, homotrimer. It depends on Mg(2+) as a cofactor.

It is found in the cytoplasm. The enzyme catalyses alpha-D-glucosamine 1-phosphate + acetyl-CoA = N-acetyl-alpha-D-glucosamine 1-phosphate + CoA + H(+). The catalysed reaction is N-acetyl-alpha-D-glucosamine 1-phosphate + UTP + H(+) = UDP-N-acetyl-alpha-D-glucosamine + diphosphate. Its pathway is nucleotide-sugar biosynthesis; UDP-N-acetyl-alpha-D-glucosamine biosynthesis; N-acetyl-alpha-D-glucosamine 1-phosphate from alpha-D-glucosamine 6-phosphate (route II): step 2/2. It participates in nucleotide-sugar biosynthesis; UDP-N-acetyl-alpha-D-glucosamine biosynthesis; UDP-N-acetyl-alpha-D-glucosamine from N-acetyl-alpha-D-glucosamine 1-phosphate: step 1/1. It functions in the pathway bacterial outer membrane biogenesis; LPS lipid A biosynthesis. In terms of biological role, catalyzes the last two sequential reactions in the de novo biosynthetic pathway for UDP-N-acetylglucosamine (UDP-GlcNAc). The C-terminal domain catalyzes the transfer of acetyl group from acetyl coenzyme A to glucosamine-1-phosphate (GlcN-1-P) to produce N-acetylglucosamine-1-phosphate (GlcNAc-1-P), which is converted into UDP-GlcNAc by the transfer of uridine 5-monophosphate (from uridine 5-triphosphate), a reaction catalyzed by the N-terminal domain. The sequence is that of Bifunctional protein GlmU from Staphylococcus epidermidis (strain ATCC 35984 / DSM 28319 / BCRC 17069 / CCUG 31568 / BM 3577 / RP62A).